We begin with the raw amino-acid sequence, 448 residues long: Protein kinase C and casein kinase substrate in neurons protein 2 (448 aa).

The region spanning 11–282 (VEVSSDSFWE…NIKTADAVED (272 aa)) is the F-BAR domain. The stretch at 25 to 274 (KRTVKRIDDG…NIYRELEQNI (250 aa)) forms a coiled coil. Positions 315-386 (SRREKKKASD…DTNPFDEDTS (72 aa)) are disordered. Positions 329 to 358 (TGINQTGDQVSQPNKHSSVSSYEKNQSYPT) are enriched in polar residues. The short motif at 367–369 (NPF) is the NPF1 element. Residues 379-381 (NPF) carry the NPF2 motif. In terms of domain architecture, SH3 spans 388-448 (VMEVRVRALY…YPANYVEPIQ (61 aa)).

This sequence belongs to the PACSIN family. In terms of processing, phosphorylated on serine residues. As to expression, detected in intestine, cardiac muscle, lung and brain (at protein level). Expressed in all tissues tested, including, gizzard, liver, cardiac muscle, skeletal muscle and skin.

The protein resides in the cytoplasm. Its subcellular location is the cytoskeleton. The protein localises to the cytoplasmic vesicle membrane. It is found in the cell projection. It localises to the ruffle membrane. The protein resides in the early endosome. Its subcellular location is the recycling endosome membrane. The protein localises to the cell membrane. It is found in the membrane. It localises to the caveola. The protein resides in the cell junction. Its subcellular location is the focal adhesion. Functionally, regulates the morphogenesis and endocytosis of caveolae. Lipid-binding protein that is able to promote the tubulation of the phosphatidic acid-containing membranes it preferentially binds. Plays a role in intracellular vesicle-mediated transport. Involved in the endocytosis of cell-surface receptors like the EGF receptor, contributing to its internalization in the absence of EGF stimulus. Essential for endothelial organization in sprouting angiogenesis, modulates CDH5-based junctions. Facilitates endothelial front-rear polarity during migration by recruiting EHD4 and MICALL1 to asymmetric adherens junctions between leader and follower cells. This is Protein kinase C and casein kinase substrate in neurons protein 2 (PACSIN2) from Gallus gallus (Chicken).